A 223-amino-acid chain; its full sequence is Small heat shock protein hspI, mitochondrial (223 aa).

A mitochondrion-targeting transit peptide spans Met-1 to Gly-23. Positions Lys-109–Gln-223 constitute a sHSP domain.

It belongs to the small heat shock protein (HSP20) family.

It is found in the mitochondrion. In Dictyostelium discoideum (Social amoeba), this protein is Small heat shock protein hspI, mitochondrial (hspI).